The chain runs to 165 residues: Transcription antitermination protein NusB (165 aa).

The tract at residues 1–27 (MISDDTDQFNPRDAKSPEIAKGKSAKR) is disordered. The segment covering 10–21 (NPRDAKSPEIAK) has biased composition (basic and acidic residues).

This sequence belongs to the NusB family.

Involved in transcription antitermination. Required for transcription of ribosomal RNA (rRNA) genes. Binds specifically to the boxA antiterminator sequence of the ribosomal RNA (rrn) operons. The sequence is that of Transcription antitermination protein NusB from Pseudomonas syringae pv. tomato (strain ATCC BAA-871 / DC3000).